Reading from the N-terminus, the 446-residue chain is Packaging protein 1 (446 aa).

The tract at residues 1-72 (MEEKAGLRHL…SQVSKSKKQR (72 aa)) is disordered. The segment covering 10-21 (LQNQQNEPSQDP) has biased composition (polar residues). Basic and acidic residues predominate over residues 32–43 (HSDRNHLNKEAE). 170 to 177 (GPTGCGKS) lines the ATP pocket. Residues 439–446 (RYYHSKKK) are DNA-binding.

It belongs to the adenoviridae packaging protein 1 family. Homodimer. Part of a genome packaging complex composed of packaging proteins 1, 2 and 3; this complex specifically binds to the packaging sequence on the left end of viral genomic DNA and performs packaging of the viral genome. Interacts with protein 33K.

It localises to the virion. Its subcellular location is the host nucleus. It is found in the host nucleoplasm. The protein resides in the host nucleolus. In terms of biological role, component of the packaging machinery which encapsidates the viral DNA into preformed capsids and transcriptional activator of the viral major late promoter (MLP). Binds, along with packaging proteins 2 and 3, to the specific packaging sequence on the left end of viral genomic DNA and displays ATPase activity thereby providing the power stroke of the packaging machinery. The activity of packaging protein IVa2 is stimulated by protein 33K which acts as a terminase. May be the protein that pumps DNA into the capsid powered by ATP hydrolysis. Specifically binds to the 5'-CG-3' nucleotides of the repeats making up the packaging sequence. Component of the DEF-A and DEF-B transcription factors that bind downstream elements of the major late promoter (MLP), and stimulate transcription from the MLP after initiation of viral DNA replication. DEF-A is a heterodimer packaging proteins 1 and 2 and DEF-B is a homodimer of packaging protein 1. The sequence is that of Packaging protein 1 from Canine adenovirus serotype 1 (strain CLL) (CAdV-1).